We begin with the raw amino-acid sequence, 697 residues long: Potassium-transporting ATPase ATP-binding subunit (697 aa).

4 helical membrane-spanning segments follow: residues 55–75, 79–99, 245–265, and 271–291; these read PIMFVVEIGFIITFILSFLPS, SIPGWFNITVSLILLFTVLFA, LTLIFLIVVVTLPIFTNYLGF, and VLVALLVCLIPTTIGGLLSAI. The active-site 4-aspartylphosphate intermediate is Asp-324. Residues Asp-361, Glu-365, 393-400, and Lys-412 each bind ATP; that span reads FKAETRMS. Mg(2+)-binding residues include Asp-535 and Asp-539. The next 3 helical transmembrane spans lie at 605–625, 633–653, and 677–697; these read FAIIPAMFTLAIPQMEALNIM, AILSALIFNAVIIPLLIPLAM, and GGVIVPFIGIKVIDMIVGLFI.

It belongs to the cation transport ATPase (P-type) (TC 3.A.3) family. Type IA subfamily. As to quaternary structure, the system is composed of three essential subunits: KdpA, KdpB and KdpC.

Its subcellular location is the cell membrane. The catalysed reaction is K(+)(out) + ATP + H2O = K(+)(in) + ADP + phosphate + H(+). Functionally, part of the high-affinity ATP-driven potassium transport (or Kdp) system, which catalyzes the hydrolysis of ATP coupled with the electrogenic transport of potassium into the cytoplasm. This subunit is responsible for energy coupling to the transport system and for the release of the potassium ions to the cytoplasm. The polypeptide is Potassium-transporting ATPase ATP-binding subunit (Bacillus cereus (strain B4264)).